The primary structure comprises 98 residues: MASFEEKIAAAEKRAQEAAKQVKQLKAKRDMVEARKLQSLLKGQRSDDTRRKILVGALVLDMMERDESTRQRFMDRLDKYLTRADDRALFQLPIPEEK.

This protein is essential to promote the specific transfer of the plasmid in the presence of conjugative plasmids. The polypeptide is Mobilization protein MobS (mobS) (Acidithiobacillus ferridurans).